Consider the following 625-residue polypeptide: uncharacterized protein (625 aa).

The segment at residues Cys-23–Cys-51 is a DNA-binding region (zn(2)-C6 fungal-type). A compositionally biased stretch (polar residues) spans Gly-93–Ser-113. Residues Gly-93–Gln-119 form a disordered region.

The protein localises to the nucleus. Its subcellular location is the cytoplasm. The protein resides in the cytoskeleton. It localises to the spindle. This is an uncharacterized protein from Schizosaccharomyces pombe (strain 972 / ATCC 24843) (Fission yeast).